The sequence spans 812 residues: Phospholipase D alpha 2 (812 aa).

A propeptide spanning residues 1–36 (MAQHLLHGTLHATIYEVDALHTGGLRSAGFLGKIIS) is cleaved from the precursor. In terms of domain architecture, C2 spans 1 to 127 (MAQHLLHGTL…INGEEVEKWV (127 aa)). A PLD phosphodiesterase 1 domain is found at 328–368 (AMFTHHQKIVVVDSEVPSQGGGSEMRRIMSFVGGIDLCDGR). Residues His-333, Lys-335, and Asp-340 contribute to the active site. His-333 is an a 1,2-diacyl-sn-glycero-3-phosphate binding site. Residue His-374 coordinates Ca(2+). Residues Gln-524 and His-663 each coordinate a 1,2-diacyl-sn-glycero-3-phosphate. One can recognise a PLD phosphodiesterase 2 domain in the interval 658–685 (FMIYVHSKMMIVDDEYIIVGSANINQRS). Active-site residues include His-663, Lys-665, and Asp-670. Glu-724 provides a ligand contact to Ca(2+).

Belongs to the phospholipase D family. C2-PLD subfamily. The cofactor is Ca(2+).

It localises to the cytoplasm. Its subcellular location is the membrane. The catalysed reaction is a 1,2-diacyl-sn-glycero-3-phosphocholine + H2O = a 1,2-diacyl-sn-glycero-3-phosphate + choline + H(+). Its function is as follows. Hydrolyzes glycerol-phospholipids at the terminal phosphodiesteric bond. Plays an important role in various cellular processes, including phytohormone action, vesicular trafficking, secretion, cytoskeletal arrangement, meiosis, tumor promotion, pathogenesis, membrane deterioration and senescence. The protein is Phospholipase D alpha 2 (PLD2) of Brassica oleracea var. capitata (Cabbage).